The following is a 520-amino-acid chain: Cilia- and flagella-associated protein 157 (520 aa).

The tract at residues 1–22 (MAPKKSVSKAGKELEVKKKGGK) is disordered. Basic and acidic residues predominate over residues 10–22 (AGKELEVKKKGGK). Coiled coils occupy residues 33 to 189 (LAKE…LEKK) and 236 to 372 (LQMA…QATS). A disordered region spans residues 416–453 (PQKAACPHQESQSHGPPKESRPSIQLPRTGSLLPQLSD). Over residues 437 to 453 (PSIQLPRTGSLLPQLSD) the composition is skewed to polar residues.

The protein belongs to the CFAP157 family. As to quaternary structure, interacts with TUBB and TUBA4A. Interacts with CEP350.

Its subcellular location is the cytoplasm. It is found in the cytoskeleton. It localises to the cilium basal body. Functionally, specifically required during spermatogenesis for flagellum morphogenesis and sperm motility. May be required to suppress the formation of supernumerary axonemes and ensure a correct ultrastructure. The protein is Cilia- and flagella-associated protein 157 of Homo sapiens (Human).